The chain runs to 104 residues: MFAVIRTGGKQYRVSPDTVLKVEKLDAEAGATVTFTDVLAVGGESGTTIGAPLVAGATVTATVIAQDRLDTVIIFKKRRRQNSRRKNGHRQPVTVLRIAAINAA.

This sequence belongs to the bacterial ribosomal protein bL21 family. As to quaternary structure, part of the 50S ribosomal subunit. Contacts protein L20.

This protein binds to 23S rRNA in the presence of protein L20. The chain is Large ribosomal subunit protein bL21 from Gluconacetobacter diazotrophicus (strain ATCC 49037 / DSM 5601 / CCUG 37298 / CIP 103539 / LMG 7603 / PAl5).